Reading from the N-terminus, the 120-residue chain is uncharacterized protein (120 aa).

Residues 70 to 109 form an RING-type zinc finger; the sequence is CARCRRSLTLTPAVSCLPCGHSCLCTDCDQLFANVCFECK.

This is an uncharacterized protein from Orgyia pseudotsugata multicapsid polyhedrosis virus (OpMNPV).